We begin with the raw amino-acid sequence, 103 residues long: Large ribosomal subunit protein bL21 (103 aa).

The protein belongs to the bacterial ribosomal protein bL21 family. In terms of assembly, part of the 50S ribosomal subunit. Contacts protein L20.

This protein binds to 23S rRNA in the presence of protein L20. This Legionella pneumophila (strain Paris) protein is Large ribosomal subunit protein bL21.